The following is a 365-amino-acid chain: Aminomethyltransferase (365 aa).

Belongs to the GcvT family. As to quaternary structure, the glycine cleavage system is composed of four proteins: P, T, L and H.

It carries out the reaction N(6)-[(R)-S(8)-aminomethyldihydrolipoyl]-L-lysyl-[protein] + (6S)-5,6,7,8-tetrahydrofolate = N(6)-[(R)-dihydrolipoyl]-L-lysyl-[protein] + (6R)-5,10-methylene-5,6,7,8-tetrahydrofolate + NH4(+). Functionally, the glycine cleavage system catalyzes the degradation of glycine. The chain is Aminomethyltransferase from Aeromonas hydrophila subsp. hydrophila (strain ATCC 7966 / DSM 30187 / BCRC 13018 / CCUG 14551 / JCM 1027 / KCTC 2358 / NCIMB 9240 / NCTC 8049).